A 44-amino-acid polypeptide reads, in one-letter code: Thymosin beta-12 (44 aa).

Basic and acidic residues-rich tracts occupy residues 1-25 (MSDK…ETQE) and 33-44 (ETIEQEKAAATS). The interval 1–44 (MSDKPDISEVTSFDKTKLKKTETQEKNPLPSKETIEQEKAAATS) is disordered. The residue at position 2 (S2) is an N-acetylserine.

Belongs to the thymosin beta family.

It is found in the cytoplasm. It localises to the cytoskeleton. Plays an important role in the organization of the cytoskeleton. Binds to and sequesters actin monomers (G actin) and therefore inhibits actin polymerization. This chain is Thymosin beta-12, found in Lateolabrax japonicus (Japanese sea perch).